Here is a 287-residue protein sequence, read N- to C-terminus: MKLSLLAAAAIAPMVSAHYFFDTLVIDGQETTPNQYVRSNTRPEKYNPTKWVNTRDDMTPDMPDFRCNKGSFTFAGQTDTAEVKAGSKLAMKLGVGATMQHPGPGLVYMSKAPGAANQYEGDGDWFKIHEEGICDTSKDIKTDAWCTWDKDRIEFTIPADLPDGEYLIRSEHIGVHGAHDGQAEFYYECAQVKVTGGGNGNPQDTIKFPGGYQKDDPSFNFSVWGGMKDYPMPGPAVYTGGSGSSTGSYNESNAEDSNEYPYQKESGTCQSNFYRREHARDFSHRRA.

Positions 1–17 (MKLSLLAAAAIAPMVSA) are cleaved as a signal peptide. A Cu(2+)-binding site is contributed by His18. Cys67 and Cys189 are joined by a disulfide. O2 is bound at residue His176. Tyr186 contacts Cu(2+). N-linked (GlcNAc...) asparagine glycans are attached at residues Asn220 and Asn250. Positions 239 to 287 (TGGSGSSTGSYNESNAEDSNEYPYQKESGTCQSNFYRREHARDFSHRRA) are disordered. Residues 274–287 (YRREHARDFSHRRA) are compositionally biased toward basic and acidic residues.

This sequence belongs to the polysaccharide monooxygenase AA9 family. Requires Cu(2+) as cofactor.

The protein localises to the secreted. The catalysed reaction is [(1-&gt;4)-beta-D-glucosyl]n+m + reduced acceptor + O2 = 4-dehydro-beta-D-glucosyl-[(1-&gt;4)-beta-D-glucosyl]n-1 + [(1-&gt;4)-beta-D-glucosyl]m + acceptor + H2O.. In terms of biological role, lytic polysaccharide monooxygenase (LPMO) that depolymerizes crystalline and amorphous polysaccharides via the oxidation of scissile alpha- or beta-(1-4)-glycosidic bonds, yielding C1 oxidation products. Catalysis by LPMOs requires the reduction of the active-site copper from Cu(II) to Cu(I) by a reducing agent and H(2)O(2) or O(2) as a cosubstrate. Active on celluloseas as well as on the hemicellulose xyloglucan. Shows synergy with other hydrolases in degrading sorghum stover. In Emericella nidulans (strain FGSC A4 / ATCC 38163 / CBS 112.46 / NRRL 194 / M139) (Aspergillus nidulans), this protein is AA9 family lytic polysaccharide monooxygenase D.